The chain runs to 891 residues: DNA mismatch repair protein MutS (891 aa).

ATP is bound at residue 643-650 (GPNMGGKS).

Belongs to the DNA mismatch repair MutS family.

In terms of biological role, this protein is involved in the repair of mismatches in DNA. It is possible that it carries out the mismatch recognition step. This protein has a weak ATPase activity. In Xanthomonas campestris pv. campestris (strain ATCC 33913 / DSM 3586 / NCPPB 528 / LMG 568 / P 25), this protein is DNA mismatch repair protein MutS.